The primary structure comprises 495 residues: MIEIDGDNLTLEDVYSVSVLHEPVELSTKARNKVAEIHRKFLDLISSGQTIYGVNTGFGGLLNIKISREEEIELQRNLIRSHSAGVGKYLPTDVVRSIMVIRANTLAKGYSAVSTELIDALLAMINKDVVPAVPEFGSVGASGDLAPLAHIGLAMMGEGQAFLNGELMRSDIALSKVGLKPYEFKEKEGVALINGTSMMAGIMALVTSRAYRTIENAVRSSLLSFEALRGTSKAFSDWIVSARPHLGQIAIAEKMRKYLAGSKNVEKSDKEKVQDAYTLRCIPQVYGAVLDTLEYVSSVLVTEINSATDNPLFNGKEVVSGGNFHGEPIALAADFLSIALTDMGNMIERRIARLVDTNLSGLPPFLVKNSGLNSGYMIPQYTAAALCNRNKVLSYPSSADSIPTSANQEDHVSMGSTSTLKLLEIEENLEYIVAIEFLLGAQALEFSQDPISPVTKAIYTKIREYVKPLDKDRPSYLDIEKIREIMNKNELINAA.

The 5-imidazolinone (Ala-Gly) cross-link spans 141 to 143 (ASG). Ser-142 is subject to 2,3-didehydroalanine (Ser).

This sequence belongs to the PAL/histidase family. Contains an active site 4-methylidene-imidazol-5-one (MIO), which is formed autocatalytically by cyclization and dehydration of residues Ala-Ser-Gly.

It localises to the cytoplasm. The enzyme catalyses L-histidine = trans-urocanate + NH4(+). Its pathway is amino-acid degradation; L-histidine degradation into L-glutamate; N-formimidoyl-L-glutamate from L-histidine: step 1/3. This chain is Probable histidine ammonia-lyase, found in Thermoplasma volcanium (strain ATCC 51530 / DSM 4299 / JCM 9571 / NBRC 15438 / GSS1).